Here is a 289-residue protein sequence, read N- to C-terminus: Glucosamine-6-phosphate deaminase 1 (289 aa).

D72 serves as the catalytic Proton acceptor; for enolization step. The active-site For ring-opening step is the D141. H143 acts as the Proton acceptor; for ring-opening step in catalysis. E148 serves as the catalytic For ring-opening step. At T161 the chain carries Phosphothreonine.

It belongs to the glucosamine/galactosamine-6-phosphate isomerase family. Homohexamer. In terms of tissue distribution, widely expressed. Detected in brain, liver, kidney, muscle, ovary, testis, spermatids and spermatozoa. In spermatids, located close to the developing acrosome vesicle. In spermatozoa, found close to the acrosomal region.

The protein resides in the cytoplasm. The enzyme catalyses alpha-D-glucosamine 6-phosphate + H2O = beta-D-fructose 6-phosphate + NH4(+). Its pathway is nucleotide-sugar biosynthesis; UDP-N-acetyl-alpha-D-glucosamine biosynthesis; alpha-D-glucosamine 6-phosphate from D-fructose 6-phosphate: step 1/1. Its activity is regulated as follows. Allosterically activated by N-acetylglucosamine-6-phosphate (GlcNAc6P). Its function is as follows. Catalyzes the reversible conversion of alpha-D-glucosamine 6-phosphate (GlcN-6P) into beta-D-fructose 6-phosphate (Fru-6P) and ammonium ion, a regulatory reaction step in de novo uridine diphosphate-N-acetyl-alpha-D-glucosamine (UDP-GlcNAc) biosynthesis via hexosamine pathway. Deamination is coupled to aldo-keto isomerization mediating the metabolic flux from UDP-GlcNAc toward Fru-6P. At high ammonium level can drive amination and isomerization of Fru-6P toward hexosamines and UDP-GlcNAc synthesis. Has a role in fine tuning the metabolic fluctuations of cytosolic UDP-GlcNAc and their effects on hyaluronan synthesis that occur during tissue remodeling. Seems to trigger calcium oscillations in mammalian eggs. These oscillations serve as the essential trigger for egg activation and early development of the embryo. This is Glucosamine-6-phosphate deaminase 1 from Mus musculus (Mouse).